The following is a 699-amino-acid chain: Integrator complex subunit 10 (699 aa).

Phosphoserine is present on residues S220 and S370. K453 participates in a covalent cross-link: Glycyl lysine isopeptide (Lys-Gly) (interchain with G-Cter in SUMO2).

The protein belongs to the Integrator subunit 10 family. Component of the Integrator complex, composed of core subunits INTS1, INTS2, INTS3, INTS4, INTS5, INTS6, INTS7, INTS8, INTS9/RC74, INTS10, INTS11/CPSF3L, INTS12, INTS13, INTS14 and INTS15. The core complex associates with protein phosphatase 2A subunits PPP2CA and PPP2R1A, to form the Integrator-PP2A (INTAC) complex. INTS10 is part of the tail subcomplex, composed of INTS10, INTS13, INTS14 and INTS15.

The protein resides in the nucleus. Component of the integrator complex, a multiprotein complex that terminates RNA polymerase II (Pol II) transcription in the promoter-proximal region of genes. The integrator complex provides a quality checkpoint during transcription elongation by driving premature transcription termination of transcripts that are unfavorably configured for transcriptional elongation: the complex terminates transcription by (1) catalyzing dephosphorylation of the C-terminal domain (CTD) of Pol II subunit POLR2A/RPB1 and SUPT5H/SPT5, (2) degrading the exiting nascent RNA transcript via endonuclease activity and (3) promoting the release of Pol II from bound DNA. The integrator complex is also involved in terminating the synthesis of non-coding Pol II transcripts, such as enhancer RNAs (eRNAs), small nuclear RNAs (snRNAs), telomerase RNAs and long non-coding RNAs (lncRNAs). Within the integrator complex, INTS10 is part of the integrator tail module that acts as a platform for the recruitment of transcription factors at promoters. May be not involved in the recruitment of cytoplasmic dynein to the nuclear envelope, probably as component of the integrator complex. The chain is Integrator complex subunit 10 (INTS10) from Macaca fascicularis (Crab-eating macaque).